The chain runs to 396 residues: Probable tRNA sulfurtransferase (396 aa).

Residues 58–169 (NQFIEKLKMV…KKNIYVFTRS (112 aa)) form the THUMP domain. Residues 187–188 (LL), 212–213 (YF), Arg269, Gly291, and Gln300 each bind ATP.

This sequence belongs to the ThiI family.

Its subcellular location is the cytoplasm. It carries out the reaction [ThiI sulfur-carrier protein]-S-sulfanyl-L-cysteine + a uridine in tRNA + 2 reduced [2Fe-2S]-[ferredoxin] + ATP + H(+) = [ThiI sulfur-carrier protein]-L-cysteine + a 4-thiouridine in tRNA + 2 oxidized [2Fe-2S]-[ferredoxin] + AMP + diphosphate. The enzyme catalyses [ThiS sulfur-carrier protein]-C-terminal Gly-Gly-AMP + S-sulfanyl-L-cysteinyl-[cysteine desulfurase] + AH2 = [ThiS sulfur-carrier protein]-C-terminal-Gly-aminoethanethioate + L-cysteinyl-[cysteine desulfurase] + A + AMP + 2 H(+). The protein operates within cofactor biosynthesis; thiamine diphosphate biosynthesis. Its function is as follows. Catalyzes the ATP-dependent transfer of a sulfur to tRNA to produce 4-thiouridine in position 8 of tRNAs, which functions as a near-UV photosensor. Also catalyzes the transfer of sulfur to the sulfur carrier protein ThiS, forming ThiS-thiocarboxylate. This is a step in the synthesis of thiazole, in the thiamine biosynthesis pathway. The sulfur is donated as persulfide by IscS. This chain is Probable tRNA sulfurtransferase, found in Halothermothrix orenii (strain H 168 / OCM 544 / DSM 9562).